The following is a 255-amino-acid chain: Defective in cullin neddylation protein 1 (255 aa).

The 38-residue stretch at 6 to 43 (QRELIREFLAVTSATSAAAETYLERNHWSLDHALDDFY) folds into the UBA-like domain. The DCUN1 domain occupies 54 to 250 (QYSAELVATF…VIDEYYEWVK (197 aa)).

Functionally, may contribute to neddylation of cullin components of SCF-type E3 ubiquitin ligase complexes. Neddylation of cullins play an essential role in the regulation of SCF-type complexes activity. In Eremothecium gossypii (strain ATCC 10895 / CBS 109.51 / FGSC 9923 / NRRL Y-1056) (Yeast), this protein is Defective in cullin neddylation protein 1 (DCN1).